The following is a 360-amino-acid chain: Photosystem II protein D1 (360 aa).

The next 3 membrane-spanning stretches (helical) occupy residues 29-46 (YIGW…TATS), 118-133 (HFLL…EWEL), and 142-156 (WIFV…AASA). Residue His118 coordinates chlorophyll a. Residue Tyr126 participates in pheophytin a binding. Asp170 and Glu189 together coordinate [CaMn4O5] cluster. Residues 197–218 (FHMAGVAGVFGGSLFSAMHGSL) traverse the membrane as a helical segment. His198 serves as a coordination point for chlorophyll a. A quinone contacts are provided by residues His215 and 264 to 265 (SF). A Fe cation-binding site is contributed by His215. His272 contacts Fe cation. The chain crosses the membrane as a helical span at residues 274–288 (FLAAWPVVGIWLTAM). His332, Glu333, Asp342, and Ala344 together coordinate [CaMn4O5] cluster. Residues 345–360 (SGDVLPVALNAPAVNG) constitute a propeptide that is removed on maturation.

Belongs to the reaction center PufL/M/PsbA/D family. As to quaternary structure, PSII is composed of 1 copy each of membrane proteins PsbA, PsbB, PsbC, PsbD, PsbE, PsbF, PsbH, PsbI, PsbJ, PsbK, PsbL, PsbM, PsbT, PsbX, PsbY, PsbZ, Psb30/Ycf12, at least 3 peripheral proteins of the oxygen-evolving complex and a large number of cofactors. It forms dimeric complexes. Requires The D1/D2 heterodimer binds P680, chlorophylls that are the primary electron donor of PSII, and subsequent electron acceptors. It shares a non-heme iron and each subunit binds pheophytin, quinone, additional chlorophylls, carotenoids and lipids. D1 provides most of the ligands for the Mn4-Ca-O5 cluster of the oxygen-evolving complex (OEC). There is also a Cl(-1) ion associated with D1 and D2, which is required for oxygen evolution. The PSII complex binds additional chlorophylls, carotenoids and specific lipids. as cofactor. Tyr-161 forms a radical intermediate that is referred to as redox-active TyrZ, YZ or Y-Z. Post-translationally, C-terminally processed by CTPA; processing is essential to allow assembly of the oxygen-evolving complex and thus photosynthetic growth.

It is found in the plastid. The protein resides in the chloroplast thylakoid membrane. The enzyme catalyses 2 a plastoquinone + 4 hnu + 2 H2O = 2 a plastoquinol + O2. Functionally, photosystem II (PSII) is a light-driven water:plastoquinone oxidoreductase that uses light energy to abstract electrons from H(2)O, generating O(2) and a proton gradient subsequently used for ATP formation. It consists of a core antenna complex that captures photons, and an electron transfer chain that converts photonic excitation into a charge separation. The D1/D2 (PsbA/PsbD) reaction center heterodimer binds P680, the primary electron donor of PSII as well as several subsequent electron acceptors. This chain is Photosystem II protein D1, found in Trieres chinensis (Marine centric diatom).